The primary structure comprises 63 residues: Large ribosomal subunit protein bL28 (63 aa).

The segment covering 11 to 20 has biased composition (polar residues); sequence GNNSGASVSH. The disordered stretch occupies residues 11 to 30; it reads GNNSGASVSHSNKKTKRKWK. Over residues 21–30 the composition is skewed to basic residues; sequence SNKKTKRKWK.

It belongs to the bacterial ribosomal protein bL28 family.

The sequence is that of Large ribosomal subunit protein bL28 from Natranaerobius thermophilus (strain ATCC BAA-1301 / DSM 18059 / JW/NM-WN-LF).